A 1157-amino-acid polypeptide reads, in one-letter code: Nitric oxide synthase, inducible (1157 aa).

The DINNN-motif; mediates interaction with SPSB1, SPSB2 and SPSB4 motif lies at 23–27; sequence DINNN. Residues 29–64 are disordered; the sequence is EKLRQASSSPVTQDDPKCPSRSRHRNECSQPLAETA. Residues C110 and C115 each contribute to the Zn(2+) site. C200 lines the heme b pocket. Q263, W372, Y373, and E377 together coordinate L-arginine. (6R)-L-erythro-5,6,7,8-tetrahydrobiopterin is bound by residues R381, I462, W463, and F476. Heme b is bound at residue Y491. The tract at residues 515–535 is calmodulin-binding; that stretch reads FKVLVKAVLFAAVLMHKTMAA. In terms of domain architecture, Flavodoxin-like spans 539–677; sequence ATILFATETG…AFRGWAVQTF (139 aa). FMN-binding residues include T545, E546, T547, R549, S550, S591, T592, S628, C635, E661, and Q665. Residues 730–970 form the FAD-binding FR-type domain; the sequence is KYVFSMRLKS…VRSASGFQLP (241 aa). R750 lines the NADP(+) pocket. FAD-binding residues include H772, R906, Y908, S909, T924, and A926. T929 lines the NADP(+) pocket. FAD-binding residues include Y930, V943, C944, and S945. NADP(+) is bound by residues T984, R1017, S1046, R1047, K1053, Y1055, Q1057, and D1090. The tract at residues 1138–1157 is disordered; sequence KEGAVGPPSDPRAPGAHGKS.

The protein belongs to the NOS family. In terms of assembly, homodimer. Interacts with NHERF1. Interacts with GAPDH; induced by oxidatively-modified low-densitity lipoprotein (LDL(ox)). Interacts with S100A8 and S100A9 to form the iNOS-S100A8/9 transnitrosylase complex. Interacts with SPSB1, SPSB2 and SPSB4. Interacts with ELOC and CUL5 in the presence of SPSB1 or SPSB2 or SPSB4. Forms a complex with ASL, ASS1 and HSP90AA1; the complex regulates cell-autonomous L-arginine synthesis and citrulline recycling while channeling extracellular L-arginine to nitric oxide synthesis pathway. The cofactor is heme b. FAD serves as cofactor. FMN is required as a cofactor. Requires (6R)-L-erythro-5,6,7,8-tetrahydrobiopterin as cofactor. In terms of processing, polyubiquitinated; mediated by SPSB1, SPSB2 and SPSB4, leading to proteasomal degradation. In terms of tissue distribution, detected in both stimulated and unstimulated immune cells and macrophages with little or no up-regulation following cellular stimulation with lipopolysaccharides (LPS) or concanavalin A (ConA).

It is found in the cytoplasm. The protein resides in the cytosol. It catalyses the reaction 2 L-arginine + 3 NADPH + 4 O2 + H(+) = 2 L-citrulline + 2 nitric oxide + 3 NADP(+) + 4 H2O. With respect to regulation, not stimulated by calcium/calmodulin. Its function is as follows. Produces nitric oxide (NO) which is a messenger molecule with diverse functions throughout the body. In macrophages, NO mediates tumoricidal and bactericidal actions. Also has nitrosylase activity and mediates cysteine S-nitrosylation of cytoplasmic target proteins such PTGS2/COX2. As component of the iNOS-S100A8/9 transnitrosylase complex involved in the selective inflammatory stimulus-dependent S-nitrosylation of GAPDH implicated in regulation of the GAIT complex activity and probably multiple targets including ANXA5, EZR, MSN and VIM. Involved in inflammation, enhances the synthesis of pro-inflammatory mediators such as IL6 and IL8. This Sus scrofa (Pig) protein is Nitric oxide synthase, inducible (NOS2).